A 388-amino-acid polypeptide reads, in one-letter code: Xylose isomerase (388 aa).

Catalysis depends on residues H54 and D57. Residues E181, E217, H220, D245, D255, D257, and D287 each contribute to the Mg(2+) site.

This sequence belongs to the xylose isomerase family. In terms of assembly, homotetramer. The cofactor is Mg(2+).

The protein localises to the cytoplasm. It catalyses the reaction alpha-D-xylose = alpha-D-xylulofuranose. This is Xylose isomerase from Streptomyces avermitilis (strain ATCC 31267 / DSM 46492 / JCM 5070 / NBRC 14893 / NCIMB 12804 / NRRL 8165 / MA-4680).